Reading from the N-terminus, the 168-residue chain is 6,7-dimethyl-8-ribityllumazine synthase (168 aa).

Residues W31, 65–67 (SFE), and 89–91 (CVV) contribute to the 5-amino-6-(D-ribitylamino)uracil site. Residue 94–95 (DT) participates in (2S)-2-hydroxy-3-oxobutyl phosphate binding. The active-site Proton donor is H97. Y122 is a 5-amino-6-(D-ribitylamino)uracil binding site. R136 contacts (2S)-2-hydroxy-3-oxobutyl phosphate.

The protein belongs to the DMRL synthase family.

The enzyme catalyses (2S)-2-hydroxy-3-oxobutyl phosphate + 5-amino-6-(D-ribitylamino)uracil = 6,7-dimethyl-8-(1-D-ribityl)lumazine + phosphate + 2 H2O + H(+). Its pathway is cofactor biosynthesis; riboflavin biosynthesis; riboflavin from 2-hydroxy-3-oxobutyl phosphate and 5-amino-6-(D-ribitylamino)uracil: step 1/2. In terms of biological role, catalyzes the formation of 6,7-dimethyl-8-ribityllumazine by condensation of 5-amino-6-(D-ribitylamino)uracil with 3,4-dihydroxy-2-butanone 4-phosphate. This is the penultimate step in the biosynthesis of riboflavin. This is 6,7-dimethyl-8-ribityllumazine synthase from Phocaeicola vulgatus (strain ATCC 8482 / DSM 1447 / JCM 5826 / CCUG 4940 / NBRC 14291 / NCTC 11154) (Bacteroides vulgatus).